A 172-amino-acid chain; its full sequence is Protein YdeJ (172 aa).

It belongs to the CinA family.

In terms of biological role, does not have nicotinamide-nucleotide (NMN) amidohydrolase activity. This chain is Protein YdeJ (ydeJ), found in Escherichia coli (strain K12).